Reading from the N-terminus, the 442-residue chain is MKIPSHRQLAIQYNVNRVTIIKSIELLEAEGFIYTKVGSGTYVNDYLNEAHITNKWSEMMLWSSQQRSQYTVQLINKIETDDSYIHISKGELGISLMPHIQLKKAMSNTASHIEDLSFGYNNGYGYIKLRDIIVERMSKQGINVGRENVMITSGALHAIQLLSIGFLGQDAIIISNTPSYIHSTNVFEQLNFRHIDVPYNQINEIDTIIDRFINFKNKAIYIEPRFNNPTGRSLTNEQKKNIITYSERHNIPIIEDDIFRDIFFSDPTPSIKTYDKLGKVIHISSFSKTIAPAIRIGWIVASEKIIEQLADVRMQIDYGSSILSQMVVYEMLKNKSYDKHLVKLRYVLKDKRDFMLNILNNLFKDIAHWEVPSGGYFVWLVFKIDIDIKYLFYELLSKEKILINPGYIYGSKEKSIRLSFAFESNENIKHALYKIYTYVKKV.

Residues 2 to 46 (KIPSHRQLAIQYNVNRVTIIKSIELLEAEGFIYTKVGSGTYVNDY) enclose the HTH gntR-type domain. Residues 6–25 (HRQLAIQYNVNRVTIIKSIE) constitute a DNA-binding region (H-T-H motif). Lysine 288 carries the N6-(pyridoxal phosphate)lysine modification.

The protein in the C-terminal section; belongs to the class-I pyridoxal-phosphate-dependent aminotransferase family. It depends on pyridoxal 5'-phosphate as a cofactor.

Its function is as follows. Positively regulates the expression of the NorB efflux pump and negatively regulates the expression of the AbcA efflux pump. Binds specifically to the promoters of norA, norB and norC and abcA genes. Could also have an aminotransferase activity. The sequence is that of HTH-type transcriptional regulator NorG (norG) from Staphylococcus aureus (strain USA300).